A 68-amino-acid polypeptide reads, in one-letter code: Small cysteine-rich protein 2 (68 aa).

An N-terminal signal peptide occupies residues 1-24; it reads MAVKFHLCLLLIILVGMGAHVAFA.

It belongs to the Cnidaria small cysteine-rich protein (SCRiP) family. gamma subfamily. Contains 4 disulfide bonds.

The protein resides in the secreted. It localises to the nematocyst. Its function is as follows. Induces neurotoxic symptoms on zebrafish. Has also been claimed to be implied in calcification, but tests on homolog proteins suggest that proteins of this family have a neurotoxic function and not a calcification function. This chain is Small cysteine-rich protein 2, found in Orbicella faveolata (Mountainous star coral).